Consider the following 708-residue polypeptide: Homeobox-leucine zipper protein HDG10 (708 aa).

The segment at 1-24 is disordered; sequence MDSSHNDSSSDEEGIDSNNRRHHS. Residues 16-75 constitute a DNA-binding region (homeobox); the sequence is DSNNRRHHSNHQVQRLEAFFHECPHPDDSQRRQLGNELNLKHKQIKFWFQNRRTQARIHN. The stretch at 119-141 forms a coiled coil; the sequence is LCNLQKLRTKNVILKTEYERLSS. Residues 162-188 are disordered; that stretch reads GPSTYGSTSNNRPASYGSSSNHLPQQS. Residues 165 to 188 show a composition bias toward polar residues; sequence TYGSTSNNRPASYGSSSNHLPQQS. Residues 218-456 form the START domain; sequence SQLEKNRMFE…LQRMCERLSL (239 aa).

Belongs to the HD-ZIP homeobox family. Class IV subfamily. As to quaternary structure, interacts with ANT, BBM and AIL1. As to expression, expressed in exclusively in anthers with highest levels in the tapetum and pollen grains.

It is found in the nucleus. Functionally, probable transcription factor. The chain is Homeobox-leucine zipper protein HDG10 from Arabidopsis thaliana (Mouse-ear cress).